A 197-amino-acid chain; its full sequence is Holliday junction branch migration complex subunit RuvA (197 aa).

Residues 1–64 are domain I; that stretch reads MYEYIKGTYM…EDFIGLYGFG (64 aa). The interval 65–143 is domain II; that stretch reads SKEELELFNK…VNLDEGIQTD (79 aa). Residues 144–149 form a flexible linker region; sequence SNDIKV. The tract at residues 149-197 is domain III; sequence VSSKILEEAKEALMSLGYSEKECEKALKNVEEKESLEIIIKESLKFLMN.

It belongs to the RuvA family. As to quaternary structure, homotetramer. Forms an RuvA(8)-RuvB(12)-Holliday junction (HJ) complex. HJ DNA is sandwiched between 2 RuvA tetramers; dsDNA enters through RuvA and exits via RuvB. An RuvB hexamer assembles on each DNA strand where it exits the tetramer. Each RuvB hexamer is contacted by two RuvA subunits (via domain III) on 2 adjacent RuvB subunits; this complex drives branch migration. In the full resolvosome a probable DNA-RuvA(4)-RuvB(12)-RuvC(2) complex forms which resolves the HJ.

It localises to the cytoplasm. Its function is as follows. The RuvA-RuvB-RuvC complex processes Holliday junction (HJ) DNA during genetic recombination and DNA repair, while the RuvA-RuvB complex plays an important role in the rescue of blocked DNA replication forks via replication fork reversal (RFR). RuvA specifically binds to HJ cruciform DNA, conferring on it an open structure. The RuvB hexamer acts as an ATP-dependent pump, pulling dsDNA into and through the RuvAB complex. HJ branch migration allows RuvC to scan DNA until it finds its consensus sequence, where it cleaves and resolves the cruciform DNA. This chain is Holliday junction branch migration complex subunit RuvA, found in Hathewaya histolytica (Clostridium histolyticum).